The sequence spans 406 residues: Cysteine desulfurase (406 aa).

K226 bears the N6-(pyridoxal phosphate)lysine mark. C364 serves as the catalytic Cysteine persulfide intermediate.

Belongs to the class-V pyridoxal-phosphate-dependent aminotransferase family. Csd subfamily. As to quaternary structure, homodimer. Interacts with SufE and the SufBCD complex composed of SufB, SufC and SufD. The interaction with SufE is required to mediate the direct transfer of the sulfur atom from the S-sulfanylcysteine. Pyridoxal 5'-phosphate serves as cofactor.

The protein localises to the cytoplasm. The enzyme catalyses (sulfur carrier)-H + L-cysteine = (sulfur carrier)-SH + L-alanine. It catalyses the reaction L-selenocysteine + AH2 = hydrogenselenide + L-alanine + A + H(+). It functions in the pathway cofactor biosynthesis; iron-sulfur cluster biosynthesis. In terms of biological role, cysteine desulfurases mobilize the sulfur from L-cysteine to yield L-alanine, an essential step in sulfur metabolism for biosynthesis of a variety of sulfur-containing biomolecules. Component of the suf operon, which is activated and required under specific conditions such as oxidative stress and iron limitation. Acts as a potent selenocysteine lyase in vitro, that mobilizes selenium from L-selenocysteine. Selenocysteine lyase activity is however unsure in vivo. The sequence is that of Cysteine desulfurase from Escherichia coli (strain K12 / MC4100 / BW2952).